The sequence spans 108 residues: Translation initiation factor 1A (108 aa).

One can recognise an S1-like domain in the interval 11–85 (PSRDVPKPEE…NRCDILYKYG (75 aa)).

This sequence belongs to the eIF-1A family.

Functionally, seems to be required for maximal rate of protein biosynthesis. Enhances ribosome dissociation into subunits and stabilizes the binding of the initiator Met-tRNA(I) to 40 S ribosomal subunits. The chain is Translation initiation factor 1A (eIF1A) from Saccharolobus islandicus (strain Y.N.15.51 / Yellowstone #2) (Sulfolobus islandicus).